We begin with the raw amino-acid sequence, 467 residues long: UDP-N-acetylmuramate--L-alanine ligase (467 aa).

114–120 (GTHGKTT) is a binding site for ATP.

The protein belongs to the MurCDEF family.

It is found in the cytoplasm. It carries out the reaction UDP-N-acetyl-alpha-D-muramate + L-alanine + ATP = UDP-N-acetyl-alpha-D-muramoyl-L-alanine + ADP + phosphate + H(+). It functions in the pathway cell wall biogenesis; peptidoglycan biosynthesis. Functionally, cell wall formation. This Rhodopseudomonas palustris (strain ATCC BAA-98 / CGA009) protein is UDP-N-acetylmuramate--L-alanine ligase.